The primary structure comprises 106 residues: ATP-dependent Clp protease adapter protein ClpS (106 aa).

This sequence belongs to the ClpS family. In terms of assembly, binds to the N-terminal domain of the chaperone ClpA.

Involved in the modulation of the specificity of the ClpAP-mediated ATP-dependent protein degradation. This Vibrio parahaemolyticus serotype O3:K6 (strain RIMD 2210633) protein is ATP-dependent Clp protease adapter protein ClpS.